Reading from the N-terminus, the 249-residue chain is Elsinochromes biosynthesis cluster protein HP3 (249 aa).

Residue asparagine 106 is glycosylated (N-linked (GlcNAc...) asparagine). Residues 138–158 traverse the membrane as a helical segment; that stretch reads VVFAFMLSAWLVWLITVYAFA.

The protein resides in the membrane. Its function is as follows. Part of the gene cluster that mediates the biosynthesis of elsinochromes, pigments consisting of at least four interconvertible tautomers (A, B, C and D) that have a core phenolic quinone to which various side chains are attached and which play an important role in fungal pathogenesis. The non-reducing polyketide synthase PKS1 was proposed to iteratively catalyze decarboxylation between acetyl-CoA and malonyl-CoA subunits for polyketide chain elongation. The released polyketide undergoes cyclization to form an aromatic ring, and proceeds via serial modification steps to produce the heptaketide back- bone of elsinochrome. As elsinochrome has a symmetrical structure, two identical heptaketides are fused to form a core 1,2-dihydrobenzo-perylene ring structure, which can then be successively modified to produce the various derivatives of elsinochrome. Some of these reactions may be cooperatively carried out, at least in part, by the products of RDT1, OXR1 and PKS1. PRF1, embedded within the elsinochrome cluster possibly functions to stabilize some of the biosynthetic enzymes required for elsinochrome production. As prefoldin is a hexamer containing 2 a and 4 b subunits, additional prefoldin subunits, whose coding genes may not immediately link to the elsinochrome biosynthetic gene cluster, are required to fulfill the chaperone function. In addition, no methyltransferase-coding gene exists within the biosynthetic gene cluster, even though elsinochrome has four methyl groups at positions C3, C7, C8 and C12. Apparently, the identified gene cluster does not contain the entire entourage of genes responsible for elsinochrome biosynthesis. Once elsinochrome is synthesized, it must be exported outside the fungal cells, which is probably accomplished by the ECT1 transporter, to avoid toxicity. This Elsinoe fawcettii (Citrus scab fungus) protein is Elsinochromes biosynthesis cluster protein HP3.